The chain runs to 269 residues: Protein tio (269 aa).

The span at Met1–Lys12 shows a compositional bias: basic and acidic residues. The segment at Met1 to Asn127 is disordered. The Cytoplasmic portion of the chain corresponds to Met1–Cys246. Over residues Pro27 to Pro41 the composition is skewed to pro residues. Residues Ser61–Pro74 show a composition bias toward low complexity. Composition is skewed to polar residues over residues Ser91 to Asn101 and Ala114 to Asn127. Phosphotyrosine; by host LCK is present on Tyr136. The tract at residues Glu158–Tyr167 is CSKH/LBD2. Positions Ile186–Pro195 are SH3B/LBD1. A helical membrane pass occupies residues Leu247–Leu267. Residues Met268 to Lys269 are Extracellular-facing.

In terms of assembly, homodimer. Binds SH3 domain of host LYN, HCK, LCK, SRC, FYN or YES. When tyrosine-phosphorylated, binds to the SH2 domain of host LCK, SRC, or FYN. In terms of processing, phosphorylated by host LCK, SRC and less efficiently by FYN.

The protein resides in the host cell membrane. Transforms host T-cells, inducing T-cell lymphomia in the host. Activates at least SRC and LCK tyrosines kinases, thereby activating signaling pathway transforming host T-cells. Human T-cells transformed ex vivo display a IL2 indenpendent growth phenotype. The sequence is that of Protein tio from Ateles (AtHV-3).